Here is a 303-residue protein sequence, read N- to C-terminus: Cyclin-dependent kinase 4 (303 aa).

N-acetylalanine is present on Ala2. One can recognise a Protein kinase domain in the interval 6–295 (YEPVAEIGVG…AFRALQHSYL (290 aa)). Residues 12-20 (IGVGAYGTV) and Lys35 contribute to the ATP site. The tract at residues 50 to 56 (PVSTVRE) is required for binding D-type cyclins. The active-site Proton acceptor is Asp140. Position 172 is a phosphothreonine; by CAK (Thr172). A Phosphoserine modification is found at Ser300.

Belongs to the protein kinase superfamily. CMGC Ser/Thr protein kinase family. CDC2/CDKX subfamily. In terms of assembly, component of the D-CDK4 complex, composed of CDK4 and some D-type G1 cyclin (CCND1, CCND2 or CCND3). Interacts directly in the complex with CCND1, CCND2 or CCND3. Interacts with SEI1 and ZNF655. Forms a ternary complex, cyclin D-CDK4-CDKN1B, involved in modulating CDK4 enzymatic activity. Interacts directly with CDKN1B (phosphorylated on 'Tyr-88' and 'Tyr-89'); the interaction allows assembly of the cyclin D-CDK4 complex, Thr-172 phosphorylation, nuclear translocation and enhances the cyclin D-CDK4 complex activity. CDK4 activity is either inhibited or enhanced depending on stoichiometry of complex. The non-tyrosine-phosphorylated form of CDKN1B prevents T-loop phosphorylation of CDK4 producing inactive CDK4. Interacts (unphosphorylated form) with CDK2. Also forms ternary complexes with CDKN1A or CDKN2A. Interacts directly with CDKN1A (via its N-terminal); the interaction promotes the assembly of the cyclin D-CDK4 complex, its nuclear translocation and promotes the cyclin D-dependent enzyme activity of CDK4. Interacts with CCND1; the interaction is prevented with the binding of CCND1 to INSM1 during cell cycle progression. Probably forms a complex composed of chaperones HSP90 and HSP70, co-chaperones CDC37, PPP5C, TSC1 and client protein TSC2, CDK4, AKT, RAF1 and NR3C1; this complex does not contain co-chaperones STIP1/HOP and PTGES3/p23. Interacts with CEBPA (when phosphorylated). Interacts with FNIP1 and FNIP2. Expressed in fetal and adult lung. Also expressed in brain, heart, liver, skeletal muscle and testes.

The protein localises to the cytoplasm. It localises to the nucleus. It is found in the nucleus membrane. The enzyme catalyses L-seryl-[protein] + ATP = O-phospho-L-seryl-[protein] + ADP + H(+). The catalysed reaction is L-threonyl-[protein] + ATP = O-phospho-L-threonyl-[protein] + ADP + H(+). Both phosphorylation at Thr-172 and binding of a D-type cyclin are necessary for enzymatic activity. Full activation of the cyclin-D-CDK4 complex appears to require other factors such as recruitment of the substrate via a substrate recruitment motif, and/or formation of the CDKN1B ternary complex. Inhibited by INK4 family members. In resting cells, the non-tyrosine-phosphorylated form of CDKN1B prevents phosphorylation at Thr-172 and inactivation, while, in proliferating cells, tyrosine phosphorylation of CDKN1B allows phosphorylation of Thr-172 of CDK4 and subsequent activation. Functionally, ser/Thr-kinase component of cyclin D-CDK4 (DC) complexes that phosphorylate and inhibit members of the retinoblastoma (RB) protein family including RB1 and regulate the cell-cycle during G(1)/S transition. Phosphorylation of RB1 allows dissociation of the transcription factor E2F from the RB/E2F complexes and the subsequent transcription of E2F target genes which are responsible for the progression through the G(1) phase. Hypophosphorylates RB1 in early G(1) phase. Cyclin D-CDK4 complexes are major integrators of various mitogenenic and antimitogenic signals. Also phosphorylates SMAD3 in a cell-cycle-dependent manner and represses its transcriptional activity. Component of the ternary complex, cyclin D/CDK4/CDKN1B, required for nuclear translocation and activity of the cyclin D-CDK4 complex. The polypeptide is Cyclin-dependent kinase 4 (Cdk4) (Rattus norvegicus (Rat)).